Consider the following 485-residue polypeptide: Glutamyl-tRNA(Gln) amidotransferase subunit A (485 aa).

Residues lysine 79 and serine 154 each act as charge relay system in the active site. Serine 178 (acyl-ester intermediate) is an active-site residue.

It belongs to the amidase family. GatA subfamily. As to quaternary structure, heterotrimer of A, B and C subunits.

It carries out the reaction L-glutamyl-tRNA(Gln) + L-glutamine + ATP + H2O = L-glutaminyl-tRNA(Gln) + L-glutamate + ADP + phosphate + H(+). In terms of biological role, allows the formation of correctly charged Gln-tRNA(Gln) through the transamidation of misacylated Glu-tRNA(Gln) in organisms which lack glutaminyl-tRNA synthetase. The reaction takes place in the presence of glutamine and ATP through an activated gamma-phospho-Glu-tRNA(Gln). The sequence is that of Glutamyl-tRNA(Gln) amidotransferase subunit A from Clostridium botulinum (strain ATCC 19397 / Type A).